We begin with the raw amino-acid sequence, 311 residues long: Thymidylate synthase (311 aa).

DUMP-binding positions include Arg28 and 172-173 (RR). Cys192 functions as the Nucleophile in the catalytic mechanism. Residues 213–216 (RSCD), Asn224, and 254–256 (HLY) contribute to the dUMP site. Asp216 is a binding site for (6R)-5,10-methylene-5,6,7,8-tetrahydrofolate. Residue Ala310 participates in (6R)-5,10-methylene-5,6,7,8-tetrahydrofolate binding.

Belongs to the thymidylate synthase family. Bacterial-type ThyA subfamily. Homodimer.

The protein localises to the cytoplasm. It carries out the reaction dUMP + (6R)-5,10-methylene-5,6,7,8-tetrahydrofolate = 7,8-dihydrofolate + dTMP. The protein operates within pyrimidine metabolism; dTTP biosynthesis. Its function is as follows. Catalyzes the reductive methylation of 2'-deoxyuridine-5'-monophosphate (dUMP) to 2'-deoxythymidine-5'-monophosphate (dTMP) while utilizing 5,10-methylenetetrahydrofolate (mTHF) as the methyl donor and reductant in the reaction, yielding dihydrofolate (DHF) as a by-product. This enzymatic reaction provides an intracellular de novo source of dTMP, an essential precursor for DNA biosynthesis. This Sphingopyxis alaskensis (strain DSM 13593 / LMG 18877 / RB2256) (Sphingomonas alaskensis) protein is Thymidylate synthase.